We begin with the raw amino-acid sequence, 255 residues long: 7alpha-hydroxysteroid dehydrogenase (255 aa).

NAD(+) is bound by residues isoleucine 23, 42–43, 68–69, and asparagine 95; these read DI. Residues glycine 99, serine 146, asparagine 151, and tyrosine 159 each coordinate glycochenodeoxycholate. NAD(+) contacts are provided by residues tyrosine 159, lysine 163, and 192–194; that span reads ILT. Tyrosine 159 (proton acceptor) is an active-site residue.

The protein belongs to the short-chain dehydrogenases/reductases (SDR) family. As to quaternary structure, homotetramer.

It catalyses the reaction cholate + NAD(+) = 3alpha,12alpha-dihydroxy-7-oxo-5beta-cholanate + NADH + H(+). It carries out the reaction chenodeoxycholate + NAD(+) = 7-oxolithocholate + NADH + H(+). The enzyme catalyses taurochenodeoxycholate + NAD(+) = 7-oxotaurolithocholate + NADH + H(+). The catalysed reaction is taurocholate + NAD(+) = 7-oxo-taurodeoxycholate + NADH + H(+). It catalyses the reaction glycocholate + NAD(+) = 7-oxo-glycodeoxycholate + NADH + H(+). It carries out the reaction glycochenodeoxycholate + NAD(+) = 7-oxoglycolithocholate + NADH + H(+). 7alpha-hydroxysteroid dehydrogenase involved in the metabolism of bile acids. Catalyzes the NAD(+)-dependent oxidation of the 7alpha-hydroxy group of 7alpha-hydroxysteroids, such as the major human bile acids cholate and chenodeoxycholate, to the corresponding 7-oxosteroids. To a lesser extent, can also act on taurochenodeoxycholate, taurocholate and glycocholate. Can also use glycochenodeoxycholate as substrate. Is not able to use NADP(+) instead of NAD(+) as the electron acceptor. The protein is 7alpha-hydroxysteroid dehydrogenase (hdhA) of Escherichia coli O157:H7.